Here is a 192-residue protein sequence, read N- to C-terminus: Shikimate kinase (192 aa).

Residue 32-37 participates in ATP binding; that stretch reads GAGKSA. Serine 36 contributes to the Mg(2+) binding site. Substrate is bound by residues aspartate 54, arginine 78, and glycine 100. An ATP-binding site is contributed by arginine 138. A substrate-binding site is contributed by arginine 157.

It belongs to the shikimate kinase family. In terms of assembly, monomer. The cofactor is Mg(2+).

Its subcellular location is the cytoplasm. It catalyses the reaction shikimate + ATP = 3-phosphoshikimate + ADP + H(+). It participates in metabolic intermediate biosynthesis; chorismate biosynthesis; chorismate from D-erythrose 4-phosphate and phosphoenolpyruvate: step 5/7. Catalyzes the specific phosphorylation of the 3-hydroxyl group of shikimic acid using ATP as a cosubstrate. The protein is Shikimate kinase of Rhizobium meliloti (strain 1021) (Ensifer meliloti).